The sequence spans 87 residues: Large ribosomal subunit protein bL27 (87 aa).

The interval 1-22 (MAHKKAGGSSRNGRDSQGQRRG) is disordered.

It belongs to the bacterial ribosomal protein bL27 family.

In Nitratidesulfovibrio vulgaris (strain DP4) (Desulfovibrio vulgaris), this protein is Large ribosomal subunit protein bL27.